Here is a 250-residue protein sequence, read N- to C-terminus: MPAGTVPTKDDVLVPETLLKKRKNADQIRAAKEAAAAEKKAANAEKDKVIFSRAEKYVKEYREAEREQIRLRREAKLNGTFYVPAEPKLVFVIRIKGISKMAPKPRKVLQLLRLHQINNGVFVRITKATAELLRIVEPYIAFGYPNLASVRQLVYKRGYGKVNKQRIPLSDNAIIEEALGKYGIICMEDLIHEIYTVGPAFKQASNFLWPFKLSNPSGGWGVRRKFKHYIEGGSTGNREENINALIKAQN.

This sequence belongs to the universal ribosomal protein uL30 family.

The chain is Large ribosomal subunit protein uL30 (RPL7) from Yarrowia lipolytica (strain CLIB 122 / E 150) (Yeast).